A 500-amino-acid chain; its full sequence is Cholesterol 24-hydroxylase (500 aa).

A helical membrane pass occupies residues 3-23 (PGLLLLGSAVLLAFGLCCTFV). Residue cysteine 437 participates in heme binding.

This sequence belongs to the cytochrome P450 family. Heme is required as a cofactor. Expressed in brain. The mRNA was broadly distributed with higher levels in gray matter zones and lower levels in regions rich in white matter. Not detected in fetal sample but its expression increases linearly with age.

Its subcellular location is the endoplasmic reticulum membrane. It is found in the microsome membrane. It localises to the postsynapse. The protein localises to the presynapse. The protein resides in the cell projection. Its subcellular location is the dendrite. The catalysed reaction is cholesterol + reduced [NADPH--hemoprotein reductase] + O2 = (24S)-hydroxycholesterol + oxidized [NADPH--hemoprotein reductase] + H2O + H(+). It catalyses the reaction cholestanol + reduced [NADPH--hemoprotein reductase] + O2 = (24S)-hydroxycholestanol + oxidized [NADPH--hemoprotein reductase] + H2O + H(+). The enzyme catalyses 7-dehydrocholesterol + reduced [NADPH--hemoprotein reductase] + O2 = cholesta-5,7-dien-3beta,24S-diol + oxidized [NADPH--hemoprotein reductase] + H2O + H(+). It carries out the reaction 7-dehydrocholesterol + reduced [NADPH--hemoprotein reductase] + O2 = cholesta-5,7-dien-3beta,25-diol + oxidized [NADPH--hemoprotein reductase] + H2O + H(+). The catalysed reaction is desmosterol + reduced [NADPH--hemoprotein reductase] + O2 = (24Z),26-hydroxydesmosterol + oxidized [NADPH--hemoprotein reductase] + H2O + H(+). It catalyses the reaction desmosterol + reduced [NADPH--hemoprotein reductase] + O2 = (24S)-25-epoxycholesterol + oxidized [NADPH--hemoprotein reductase] + H2O + H(+). The enzyme catalyses 4beta-hydroxycholesterol + reduced [NADPH--hemoprotein reductase] + O2 = 4beta,24S-dihydroxycholesterol + oxidized [NADPH--hemoprotein reductase] + H2O + H(+). It carries out the reaction (24S)-hydroxycholesterol + reduced [NADPH--hemoprotein reductase] + O2 = (24S,25R)-24,26-dihydroxycholesterol + oxidized [NADPH--hemoprotein reductase] + H2O + H(+). The catalysed reaction is (24S)-hydroxycholesterol + reduced [NADPH--hemoprotein reductase] + O2 = 24S,25-dihydroxycholesterol + oxidized [NADPH--hemoprotein reductase] + H2O + H(+). It catalyses the reaction 7alpha-hydroxycholesterol + reduced [NADPH--hemoprotein reductase] + O2 = (24S)-7alpha-dihydroxycholesterol + oxidized [NADPH--hemoprotein reductase] + H2O + H(+). The enzyme catalyses progesterone + reduced [NADPH--hemoprotein reductase] + O2 = 17alpha-hydroxyprogesterone + oxidized [NADPH--hemoprotein reductase] + H2O + H(+). It carries out the reaction testosterone + reduced [NADPH--hemoprotein reductase] + O2 = 16beta,17beta-dihydroxyandrost-4-en-3-one + oxidized [NADPH--hemoprotein reductase] + H2O + H(+). The catalysed reaction is testosterone + reduced [NADPH--hemoprotein reductase] + O2 = 2-hydroxytestosterone + oxidized [NADPH--hemoprotein reductase] + H2O + H(+). It catalyses the reaction testosterone + reduced [NADPH--hemoprotein reductase] + O2 = 6beta,17beta-dihydroxyandrost-4-en-3-one + oxidized [NADPH--hemoprotein reductase] + H2O + H(+). It functions in the pathway steroid metabolism; cholesterol degradation. The protein operates within lipid metabolism; C21-steroid hormone metabolism. Functionally, P450 monooxygenase that plays a major role in cholesterol homeostasis in the brain. Primarily catalyzes the hydroxylation (with S stereochemistry) at C-24 of cholesterol side chain, triggering cholesterol diffusion out of neurons and its further degradation. By promoting constant cholesterol elimination in neurons, may activate the mevalonate pathway and coordinate the synthesis of new cholesterol and nonsterol isoprenoids involved in synaptic activity and learning. Further hydroxylates cholesterol derivatives and hormone steroids on both the ring and side chain of these molecules, converting them into active oxysterols involved in lipid signaling and biosynthesis. Acts as an epoxidase converting cholesta-5,24-dien-3beta-ol/desmosterol into (24S),25-epoxycholesterol, an abundant lipid ligand of nuclear NR1H2 and NR1H3 receptors shown to promote neurogenesis in developing brain. May also catalyze the oxidative metabolism of xenobiotics, such as clotrimazole. The polypeptide is Cholesterol 24-hydroxylase (Homo sapiens (Human)).